Reading from the N-terminus, the 274-residue chain is 5-deoxy-glucuronate isomerase (274 aa).

Belongs to the isomerase IolB family.

The enzyme catalyses 5-deoxy-D-glucuronate = 5-dehydro-2-deoxy-D-gluconate. Its pathway is polyol metabolism; myo-inositol degradation into acetyl-CoA; acetyl-CoA from myo-inositol: step 4/7. In terms of biological role, involved in the isomerization of 5-deoxy-glucuronate (5DG) to 5-dehydro-2-deoxy-D-gluconate (DKG or 2-deoxy-5-keto-D-gluconate). The sequence is that of 5-deoxy-glucuronate isomerase from Geobacillus thermodenitrificans (strain NG80-2).